The following is a 3461-amino-acid chain: Abnormal spindle-like microcephaly-associated protein homolog (3461 aa).

Positions 1–30 (MATRRAGRSWEVSPTERRPSARPRNSAAEE) are disordered. Ser-279, Ser-282, Ser-367, Ser-392, Ser-426, and Ser-606 each carry phosphoserine. The Calponin-homology (CH) 1 domain maps to 921 to 1057 (KTSKEILLAF…LLWKIAFAFQ (137 aa)). Positions 1058–1077 (VDISLNLDQLKEEIDFLKHT) form a coiled coil. At Ser-1104 the chain carries Phosphoserine. The 152-residue stretch at 1111-1262 (SESIKLLMDW…YLSFLCARLL (152 aa)) folds into the Calponin-homology (CH) 2 domain. IQ domains lie at 1267-1296 (ETRAARLIQTTWRKYKQKTDLKRHQERDKA), 1348-1379 (QNKSALVIQRYWRRYSTRKQFLKLKYYSVILQ), 1488-1517 (LRSCVVIIQTRFRCLQAQKSYKRRREAILT), 1511-1540 (RREAILTIQKFYRAHLKGKTERANYLQKRA), 1538-1569 (KRAAAIQLQAAFRGMKARNLHRQIRAACVFQS), 1583-1614 (LKKITIKLQAQVRMHQQLQKYKKIKKAALIIQ), 1633-1662 (TRSAVIVLQSAYRGMQARRKFIHILTSIIK), 1656-1685 (ILTSIIKIQSYYRAYISRKKFLRLKHATVK), 1729-1758 (MRESCIKLQAFVRGHLVRKQMRSQRKAAVS), 1752-1783 (QRKAAVSLQSYFRMRKMRQHYLEMYKAAVVIQ), 1775-1804 (MYKAAVVIQNYYRAYKAQVSQRKNFLQVKR), 1802-1831 (VKRAVTCVQAAYRGYKVRQLIKQQSIAALK), 1825-1854 (QSIAALKIQTAFRGYSKRKKYQYVLQSTIK), 1875-1904 (TKAAVISLQSAYRGWKVRTQIRRELQAAVR), 1898-1929 (ELQAAVRIQSAFRMAQTQKQFRLFKTAALVIQ), 1948-1979 (LRNAALMLQSTWKGKIVRRQIRKQHKCAVIIQ), 1971-2002 (QHKCAVIIQSYYRMHVQQKKWDIMKKAARLIQ), 2021-2050 (TKAAIVIIQSAYRSMRVRKKIKEYNKAAVA), 2044-2075 (YNKAAVAIQSTYRAYKAKKNYATYRASAVLIQ), 2094-2125 (LKKTAVKIQAVFRGIRVRRRIQHMHTAATFIK), 2117-2148 (MHTAATFIKAMFKMHQAKVRYHKMRTAAVLIQ), 2167-2198 (ILKAVTVLQASFRGVRVRQTLRKMQNAAIRIQ), 2190-2219 (MQNAAIRIQSCYRRYRQQTYFNKLKKVTQT), 2240-2271 (LRHSAICIQAGFRGMKARRHLRMMHLAATLIQ), 2313-2344 (LQKAVITLQSSYRGWVVRKKMQEMHRAATVIQ), 2336-2367 (MHRAATVIQAAFRMHRAHVRYQAVRQASVVIQ), 2386-2417 (QRHSALILQAAFRSMKARRHLKMMHSSAVLIQ), 2409-2440 (MHSSAVLIQSRFRGLVVRKRFVSLKKAAVFVQ), 2459-2490 (VQKAVITIQSSYRRLMAKKKVQAMHRAAALIQ), 2532-2563 (QRHSALVIQAAYKGMKARQLLREKHRAAIIIQ), 2666-2697 (RTQAVICIQSSYRGFKVRKGIQRMHLAATLIQ), 2689-2720 (MHLAATLIQSLYRMHRAKLDYRAKKTAVVLIQ), 2739-2768 (LQKSVRIIQAAFRGMKVRQKLKNLSEAKMA), 2837-2866 (QKHAALRIQSFLQMAVYRRRFVQQKRAAVT), 2860-2891 (QKRAAVTLQQYFRTWQARKQFLLYRKAASVLQ), 2910-2939 (VRSSVIIIQARTRGFIQKRKFQKIKDSTIK), 2933-2964 (IKDSTIKIQAAWRSYKARKYLCKVKAACKIQA), 2955-2986 (KVKAACKIQAWYRSWKARKEYLAILKAVKVIQ), 3030-3059 (RHQAACLIQANFRRYKGRQVFLRQKSAALT), 3080-3111 (LKKSTVVLQALVRGWLVRKRISEQRTKIRLLH), 3182-3211 (QNRAASVIQKAVRRFLLRKKKEKINNGITK), and 3205-3236 (INNGITKIQALWRGYSWRKKNDGTKIKAIRLS).

It is found in the cytoplasm. The protein resides in the cytoskeleton. Its subcellular location is the spindle. The protein localises to the nucleus. Its function is as follows. Probable role in mitotic spindle regulation and coordination of mitotic processes. May have a preferential role in regulating neurogenesis. This is Abnormal spindle-like microcephaly-associated protein homolog (ASPM) from Felis catus (Cat).